Here is a 530-residue protein sequence, read N- to C-terminus: GMP synthase [glutamine-hydrolyzing] (530 aa).

Residues 4-205 (RILILDYGSQ…VREICGCEGD (202 aa)) enclose the Glutamine amidotransferase type-1 domain. Cysteine 84 functions as the Nucleophile in the catalytic mechanism. Active-site residues include histidine 179 and glutamate 181. One can recognise a GMPS ATP-PPase domain in the interval 206 to 398 (WNMPDYISEA…LGLPPQMVYR (193 aa)). 233–239 (SGGVDSS) contributes to the ATP binding site.

As to quaternary structure, homodimer.

The enzyme catalyses XMP + L-glutamine + ATP + H2O = GMP + L-glutamate + AMP + diphosphate + 2 H(+). It participates in purine metabolism; GMP biosynthesis; GMP from XMP (L-Gln route): step 1/1. In terms of biological role, catalyzes the synthesis of GMP from XMP. The sequence is that of GMP synthase [glutamine-hydrolyzing] from Bordetella avium (strain 197N).